The sequence spans 2189 residues: Chromatin modification-related protein eaf-1 (2189 aa).

3 disordered regions span residues 183-400 (VQGS…SGAE), 415-438 (VIGKAGVAGPHGAHSTGGLQTQHP), and 477-601 (EVAK…PPGL). The segment covering 234-253 (PTPQTVAPPATAPTSTTKTA) has biased composition (low complexity). Positions 260-277 (AGPKDDTVSRGDAEEKAR) are enriched in basic and acidic residues. Composition is skewed to polar residues over residues 281–293 (TITSVNQLLSNGD), 300–312 (TLSSPSSTVQSAP), and 319–333 (ASASTSPDNEASQSF). A compositionally biased stretch (basic and acidic residues) spans 336 to 349 (PVSRPEQELRRATT). Positions 534–543 (QPQPSSTAPS) are enriched in low complexity. A compositionally biased stretch (polar residues) spans 573-583 (ETQARTSQSSH). In terms of domain architecture, HSA spans 722–797 (PVRCLEPARP…PPVRAVDNAD (76 aa)). A Myb-like domain is found at 985–1045 (FESRIASQWT…ECFERWVNLE (61 aa)). Composition is skewed to low complexity over residues 1320–1330 (VAVQLQQQQHQ) and 1336–1406 (QHPQ…QVTQ). Disordered regions lie at residues 1320-1428 (VAVQ…PMRP), 1622-1644 (MQTQTPAHQPHQPQAQPHVQAQA), 1663-1831 (QKQA…GQVQ), and 1846-2189 (VQGQ…APTK). 5 stretches are compositionally biased toward low complexity: residues 1663–1808 (QKQA…QGQG), 1818–1831 (GQGHAQGQVQGQVQ), 1846–1863 (VQGQVQGQAPGQVQPQHA), 1873–2089 (QHAQ…QPQQ), and 2097–2189 (SQPQ…APTK).

It belongs to the EAF1 family. In terms of assembly, component of the NuA4 histone acetyltransferase complex.

The protein localises to the nucleus. In terms of biological role, component of the NuA4 histone acetyltransferase complex which is involved in transcriptional activation of selected genes principally by acetylation of nucleosomal histone H4 and H2A. The NuA4 complex is also involved in DNA repair. This chain is Chromatin modification-related protein eaf-1 (eaf-1), found in Neurospora crassa (strain ATCC 24698 / 74-OR23-1A / CBS 708.71 / DSM 1257 / FGSC 987).